The chain runs to 769 residues: Probable beta-glucosidase M (769 aa).

The N-terminal stretch at 1–22 is a signal peptide; sequence MHSNLGLAGLAGLLATASVCLS. Asparagine 28, asparagine 75, and asparagine 262 each carry an N-linked (GlcNAc...) asparagine glycan. Aspartate 290 is an active-site residue. Asparagine 318, asparagine 325, asparagine 437, and asparagine 546 each carry an N-linked (GlcNAc...) asparagine glycan.

Belongs to the glycosyl hydrolase 3 family.

The protein resides in the secreted. It carries out the reaction Hydrolysis of terminal, non-reducing beta-D-glucosyl residues with release of beta-D-glucose.. It functions in the pathway glycan metabolism; cellulose degradation. Functionally, beta-glucosidases are one of a number of cellulolytic enzymes involved in the degradation of cellulosic biomass. Catalyzes the last step releasing glucose from the inhibitory cellobiose. The polypeptide is Probable beta-glucosidase M (bglM) (Neosartorya fischeri (strain ATCC 1020 / DSM 3700 / CBS 544.65 / FGSC A1164 / JCM 1740 / NRRL 181 / WB 181) (Aspergillus fischerianus)).